The primary structure comprises 578 residues: Probable arginine--tRNA ligase, mitochondrial (578 aa).

The N-terminal 16 residues, 1–16 (MACGFRRSIACQLSRV), are a transit peptide targeting the mitochondrion. L-arginine-binding positions include 133–135 (SPN), histidine 144, tyrosine 322, aspartate 326, and glutamine 350. The 'HIGH' region signature appears at 133-144 (SPNIAKKFHVGH). At lysine 568 the chain carries N6-acetyllysine.

The protein belongs to the class-I aminoacyl-tRNA synthetase family.

It is found in the mitochondrion membrane. It carries out the reaction tRNA(Arg) + L-arginine + ATP = L-arginyl-tRNA(Arg) + AMP + diphosphate. Its function is as follows. Catalyzes the attachment of arginine to tRNA(Arg) in a two-step reaction: arginine is first activated by ATP to form Arg-AMP and then transferred to the acceptor end of tRNA(Arg). This chain is Probable arginine--tRNA ligase, mitochondrial (Rars2), found in Mus musculus (Mouse).